Here is a 422-residue protein sequence, read N- to C-terminus: SPbeta prophage-derived glycosyltransferase SunS (422 aa).

This sequence belongs to the glycosyltransferase 2 family.

Functionally, transfers a hexose moiety onto 'Cys-41' of bacteriocin sublancin-168 (SunA). Accepts UDP-glucose (UDP-Glc), UDP-N-acetylglucosamine (UDP-GlcNAc), UDP-galactose (UDP-Gal), UDP-xylose (UDP-Xyl) and GDP-mannose as substrate. In Bacillus subtilis (strain 168), this protein is SPbeta prophage-derived glycosyltransferase SunS (sunS).